The primary structure comprises 200 residues: Protein GrpE (200 aa).

A disordered region spans residues 15 to 47; it reads DLEMDLNEEELEESEVNEDKEFEELDKSEEENE. Residues 16–47 are compositionally biased toward acidic residues; it reads LEMDLNEEELEESEVNEDKEFEELDKSEEENE.

It belongs to the GrpE family. In terms of assembly, homodimer.

The protein resides in the cytoplasm. Its function is as follows. Participates actively in the response to hyperosmotic and heat shock by preventing the aggregation of stress-denatured proteins, in association with DnaK and GrpE. It is the nucleotide exchange factor for DnaK and may function as a thermosensor. Unfolded proteins bind initially to DnaJ; upon interaction with the DnaJ-bound protein, DnaK hydrolyzes its bound ATP, resulting in the formation of a stable complex. GrpE releases ADP from DnaK; ATP binding to DnaK triggers the release of the substrate protein, thus completing the reaction cycle. Several rounds of ATP-dependent interactions between DnaJ, DnaK and GrpE are required for fully efficient folding. In Clostridium tetani (strain Massachusetts / E88), this protein is Protein GrpE.